The sequence spans 330 residues: MALRMPFNQAFWEEYLSGQDATLPSLPDTSTLTSRVIRILGGNPGAMHLQGTNTYLVGTGPSRILIDTGQGLPIWLSRIVGVLQSNNISISHILLTHWHGDHTGGVPDLISYNPTLAEHVYKNLPDLGQKPIEDGQIFAVEGATVRAVFTPGHSVDHMCFLLEEENALFTGDNVLGHGFSVAPDLGRYMESLELMAKLGCVIGYPAHGAVIDDLPSKLEEYIRHKEMRVQGILSVLVKERERVEGERGKEGRRKGGMTLHEIARAMFGTVPDEVIDQAMAPFLMQALWKLTEDGKVGFEPGDPVKRKWFAVARRKTRPSIRRQHGSVTSR.

Zn(2+)-binding residues include His-97, His-99, Asp-101, and His-102. Asp-101 acts as the Proton donor/acceptor in catalysis.

This sequence belongs to the metallo-beta-lactamase superfamily. Requires Zn(2+) as cofactor.

Its pathway is secondary metabolite biosynthesis. Lactamase-like protein; part of the gene cluster that mediates the biosynthesis of neosartoricin, a prenylated anthracenone that exhibits T-cell antiproliferative activity, suggestive of a physiological role as an immunosuppressive agent. The non-reducing polyketide synthase nscA probably synthesizes and cyclizes the decaketide backbone. The hydrolase nscB then mediates the product release through hydrolysis followed by spontaneous decarboxylation. The prenyltransferase nscD catalyzes the addition of the dimethylallyl group to the aromatic C5. The FAD-dependent monooxygenase nscC is then responsible for the stereospecific hydroxylation at C2. There is no gene encoding O-acetyltransferase in the nsc gene cluster; thus, the last step of 2-O-acetylation leading to neosartoricin may be catalyzed by an unidentified O-acetyltransferase. This Aspergillus fumigatus (strain ATCC MYA-4609 / CBS 101355 / FGSC A1100 / Af293) (Neosartorya fumigata) protein is Lactamase-like protein nscB.